A 459-amino-acid polypeptide reads, in one-letter code: Neuronal acetylcholine receptor subunit beta-2 (459 aa).

The Extracellular portion of the chain corresponds to 1 to 203 (LRSDFLLGPE…ITYDFVIKRK (203 aa)). N-linked (GlcNAc...) asparagine glycans are attached at residues Asn21 and Asn138. An intrachain disulfide couples Cys125 to Cys139. A helical membrane pass occupies residues 204–228 (PLFYTINLIIPCVLITSLAILVFYL). Residues 229–235 (PSDCGEK) lie on the Cytoplasmic side of the membrane. The helical transmembrane segment at 236 to 254 (VTLCMSVLLALTVFLLLIS) threads the bilayer. At 255-269 (KIVPPTSLAVPLIGK) the chain is on the extracellular side. Residues 270-291 (YLMFTMVLVTFSIVTSVCVLNV) traverse the membrane as a helical segment. At 292-421 (HHRSPSTHYM…WKYVAMVIDR (130 aa)) the chain is on the cytoplasmic side. Residues 422–440 (LFLWIFILVCVVGTLGLFV) traverse the membrane as a helical segment.

This sequence belongs to the ligand-gated ion channel (TC 1.A.9) family. Acetylcholine receptor (TC 1.A.9.1) subfamily. Beta-2/CHRNB2 sub-subfamily. As to quaternary structure, neuronal AChR is a heteropentamer composed of two different types of subunits: alpha and beta. CHRNB2/Beta-2 subunit can be combined to CHRNA2/alpha-2, CHRNA3/alpha-3 or CHRNA4/alpha-4, CHRNA5/alpha-5, CHRNA6/alpha-6 and CHRNB3/beta-3 to give rise to functional receptors.

Its subcellular location is the synaptic cell membrane. The protein localises to the cell membrane. The catalysed reaction is Ca(2+)(in) = Ca(2+)(out). It carries out the reaction K(+)(in) = K(+)(out). It catalyses the reaction Na(+)(in) = Na(+)(out). Activated by a myriad of ligands such as acetylcholine, cytisine, nicotine, choline and epibatidine. nAChR activity is inhibited by the antagonist alpha-conotoxins BuIA, PnIA, PnIC, GID and MII, small disulfide-constrained peptides from cone snails. Its function is as follows. Component of neuronal acetylcholine receptors (nAChRs) that function as pentameric, ligand-gated cation channels with high calcium permeability among other activities. nAChRs are excitatory neurotrasnmitter receptors formed by a collection of nAChR subunits known to mediate synaptic transmission in the nervous system and the neuromuscular junction. Each nAchR subunit confers differential attributes to channel properties, including activation, deactivation and desensitization kinetics, pH sensitivity, cation permeability, and binding to allosteric modulators. CHRNB2 forms heteropentameric neuronal acetylcholine receptors with CHRNA2, CHRNA3, CHRNA4 and CHRNA6, as well as CHRNA5 and CHRNB3 as accesory subunits. This chain is Neuronal acetylcholine receptor subunit beta-2 (chrnb2), found in Carassius auratus (Goldfish).